A 296-amino-acid chain; its full sequence is Formamidopyrimidine-DNA glycosylase (296 aa).

The Schiff-base intermediate with DNA role is filled by Pro-2. Residue Glu-3 is the Proton donor of the active site. The active-site Proton donor; for beta-elimination activity is the Lys-58. Residues His-104, Arg-126, and Lys-169 each contribute to the DNA site. The segment at Ser-260–Lys-296 adopts an FPG-type zinc-finger fold. The active-site Proton donor; for delta-elimination activity is Arg-286.

It belongs to the FPG family. Monomer. The cofactor is Zn(2+).

It carries out the reaction Hydrolysis of DNA containing ring-opened 7-methylguanine residues, releasing 2,6-diamino-4-hydroxy-5-(N-methyl)formamidopyrimidine.. The enzyme catalyses 2'-deoxyribonucleotide-(2'-deoxyribose 5'-phosphate)-2'-deoxyribonucleotide-DNA = a 3'-end 2'-deoxyribonucleotide-(2,3-dehydro-2,3-deoxyribose 5'-phosphate)-DNA + a 5'-end 5'-phospho-2'-deoxyribonucleoside-DNA + H(+). Involved in base excision repair of DNA damaged by oxidation or by mutagenic agents. Acts as a DNA glycosylase that recognizes and removes damaged bases. Has a preference for oxidized purines, such as 7,8-dihydro-8-oxoguanine (8-oxoG). Has AP (apurinic/apyrimidinic) lyase activity and introduces nicks in the DNA strand. Cleaves the DNA backbone by beta-delta elimination to generate a single-strand break at the site of the removed base with both 3'- and 5'-phosphates. In Sinorhizobium fredii (strain NBRC 101917 / NGR234), this protein is Formamidopyrimidine-DNA glycosylase.